A 1456-amino-acid polypeptide reads, in one-letter code: Putative 1-phosphatidylinositol-3-phosphate 5-kinase FAB1D (1456 aa).

Positions 1-19 are enriched in low complexity; it reads MTPSNSLSSSERSLSGECS. 6 disordered regions span residues 1–110, 533–592, 925–944, 967–987, 1003–1022, and 1137–1159; these read MTPS…EVDG, PVSV…NDIE, ENDN…TPLV, VPED…TSPI, NGQE…DDEV, and NNQD…TNRL. A compositionally biased stretch (basic and acidic residues) spans 43-57; it reads ELTKEVKVDRLERKS. Acidic residues predominate over residues 86–110; that stretch reads REDDSDDVPVWEPPEPENPEDEVDG. The span at 533–544 shows a compositional bias: low complexity; that stretch reads PVSVDTDVSTTS. The span at 973–987 shows a compositional bias: polar residues; that stretch reads SQTLCSSSPDTTSPI. The region spanning 1115–1443 is the PIPK domain; sequence NNEESKKPLS…RFRKFMKTHF (329 aa). Residues 1150 to 1159 show a composition bias toward polar residues; the sequence is RFSSESTNRL.

Component of the PI(3,5)P2 regulatory complex at least composed of ATG18, SAC/FIG4, FAB1 and VAC14. It depends on Mg(2+) as a cofactor. Requires Mn(2+) as cofactor.

The enzyme catalyses a 1,2-diacyl-sn-glycero-3-phospho-(1D-myo-inositol-3-phosphate) + ATP = a 1,2-diacyl-sn-glycero-3-phospho-(1D-myo-inositol-3,5-bisphosphate) + ADP + H(+). Functionally, the PI(3,5)P2 regulatory complex regulates both the synthesis and turnover of phosphatidylinositol 3,5-bisphosphate (PtdIns(3,5)P2). Catalyzes the phosphorylation of phosphatidylinositol 3-phosphate on the fifth hydroxyl of the myo-inositol ring, to form phosphatidylinositol 3,5-bisphosphate. The chain is Putative 1-phosphatidylinositol-3-phosphate 5-kinase FAB1D (FAB1D) from Arabidopsis thaliana (Mouse-ear cress).